A 197-amino-acid polypeptide reads, in one-letter code: Stanniocalcin-2 (197 aa).

The segment at 1–20 is disordered; that stretch reads TDAXNPPEGPQDRGSQQKGR.

Belongs to the stanniocalcin family. In terms of assembly, homodimer; disulfide-linked.

Its subcellular location is the secreted. Its function is as follows. Has an anti-hypocalcemic action on calcium and phosphate homeostasis. This Cavia porcellus (Guinea pig) protein is Stanniocalcin-2 (STC2).